The sequence spans 199 residues: MASEFWLIVGLGNPGAKYRNTRHNMGFMTVNELAKRWSIHFANHKGLADLGKGTMSLNGQTAKVFLCKPLTYMNDSGQAVQSIREYYHINLDHIVVIHDDMDLEFGRIKLKSGGSAGGHNGIKSIDRCLHSPDYARVRMGVGHASRSGDAHDNTINWVLGEFNAAQRKQLPEFLADGADAAETIVFEGLTKAQDKFNAR.

Tyrosine 18 lines the tRNA pocket. Residue histidine 23 is the Proton acceptor of the active site. 3 residues coordinate tRNA: tyrosine 72, asparagine 74, and asparagine 120.

Belongs to the PTH family. Monomer.

It localises to the cytoplasm. The enzyme catalyses an N-acyl-L-alpha-aminoacyl-tRNA + H2O = an N-acyl-L-amino acid + a tRNA + H(+). In terms of biological role, hydrolyzes ribosome-free peptidyl-tRNAs (with 1 or more amino acids incorporated), which drop off the ribosome during protein synthesis, or as a result of ribosome stalling. Functionally, catalyzes the release of premature peptidyl moieties from peptidyl-tRNA molecules trapped in stalled 50S ribosomal subunits, and thus maintains levels of free tRNAs and 50S ribosomes. The sequence is that of Peptidyl-tRNA hydrolase from Bifidobacterium animalis subsp. lactis (strain AD011).